The following is a 951-amino-acid chain: Valine--tRNA ligase (951 aa).

The 'HIGH' region signature appears at 42 to 52; the sequence is PNVTGSLHMGH. Positions 554–558 match the 'KMSKS' region motif; it reads KMSKS. Residue Lys-557 coordinates ATP. The stretch at 880-944 forms a coiled coil; the sequence is AGLINKEDEL…AEAKAKLIEQ (65 aa).

The protein belongs to the class-I aminoacyl-tRNA synthetase family. ValS type 1 subfamily. As to quaternary structure, monomer.

It localises to the cytoplasm. It catalyses the reaction tRNA(Val) + L-valine + ATP = L-valyl-tRNA(Val) + AMP + diphosphate. Catalyzes the attachment of valine to tRNA(Val). As ValRS can inadvertently accommodate and process structurally similar amino acids such as threonine, to avoid such errors, it has a 'posttransfer' editing activity that hydrolyzes mischarged Thr-tRNA(Val) in a tRNA-dependent manner. The sequence is that of Valine--tRNA ligase from Escherichia coli O6:H1 (strain CFT073 / ATCC 700928 / UPEC).